The following is a 489-amino-acid chain: MASAASVTSLADEVNCPVCQGTLREPVTIDCGHNFCRVCLTRYLEITSPDPEEPPTCPLCKEPFRPGNFRPNWQLANVVENIERLKLVSQMDLDEEDVCPEHGEKVYFFCEDDEMQLCVVCREAWEHRAHTVRFLEDAAGPYREQIQKCLECLRKEREEIQEIQSRENRRIQVLLTQVATKKQKVISEFAHLSQFLEEQQNILLDQLEKLDEDILKHRDEFDVLVTGEIGRFNTLIEELEEKKERPARELLTDIRSTLIRCETRRCRKPVAISPELGQRIRDFPQQAFPLQREMKMFLEKLSFELDYEPAHISLDPRTSHPKLLLSEDYQQARFSYKWQKSPDNPQRFDRATCVLAHGGFTGGRHTWVVSVDLAHGGSCTLGVVSKDIRRKGELRMRPEEGVWAVRLAWGFVSALSSFPTRLTLEEQPQQVRVSIDYEVGWVTFANAVTQEPIYTFTASFTQKVFPFFGLWGRGSKFSLSSQEGAATLS.

The RING-type zinc finger occupies 16 to 61 (CPVCQGTLREPVTIDCGHNFCRVCLTRYLEITSPDPEEPPTCPLCK). The B box-type zinc-finger motif lies at 94–135 (DEEDVCPEHGEKVYFFCEDDEMQLCVVCREAWEHRAHTVRFL). Cys-99, His-102, Cys-121, and His-127 together coordinate Zn(2+). Residues 142 to 245 (YREQIQKCLE…IEELEEKKER (104 aa)) are a coiled coil. Positions 292 to 486 (REMKMFLEKL…FSLSSQEGAA (195 aa)) constitute a B30.2/SPRY domain.

The protein belongs to the TRIM/RBCC family. As to quaternary structure, interacts with IFNAR1; this interaction prevents association of IFNAR1 with TYK2.

Its subcellular location is the cytoplasm. E3 ligase that plays an essential role in the differentiation and survival of terminal erythroid cells. May directly bind to PTEN and promote its ubiquitination, resulting in its proteasomal degradation and activation of hypertrophic signaling. In addition, plays a role in immune response regulation by repressing the phosphorylation of STAT1 and STAT2 in the interferon/JAK/STAT signaling pathway independent of its E3 ligase activity. Mechanistically, interacts with the intracellular domain of IFNAR1 and thereby inhibits the association between TYK2 and IFNAR1. The chain is Tripartite motif-containing protein 10 (TRIM10) from Bos taurus (Bovine).